A 41-amino-acid chain; its full sequence is Histone H2B.3, sperm (41 aa).

Positions 1 to 41 (MPRSPSKSSPKKGSPRKASPKRGGKGAKRAGKGGRRRTVVK) are disordered. Short sequence motifs (SPKK motif) lie at residues 4 to 7 (SPSK), 9 to 12 (SPKK), 14 to 17 (SPRK), and 19 to 22 (SPKR). Residues 9–41 (SPKKGSPRKASPKRGGKGAKRAGKGGRRRTVVK) are compositionally biased toward basic residues. Serine 14 and serine 19 each carry phosphoserine.

This sequence belongs to the histone H2B family. The nucleosome is a histone octamer containing two molecules each of H2A, H2B, H3 and H4 assembled in one H3-H4 heterotetramer and two H2A-H2B heterodimers. The octamer wraps approximately 147 bp of DNA. Post-translationally, monoubiquitination gives a specific tag for epigenetic transcriptional activation and is also prerequisite for histone H3 'Lys-4' and 'Lys-79' methylation. Phosphorylated on SPKK motifs 3 and 4; which may regulate DNA binding. Dephosphorylated during maturation of spermatids to mature sperm and rephosphorylated at fertilization.

The protein localises to the nucleus. It localises to the chromosome. Its function is as follows. Core component of nucleosome. Nucleosomes wrap and compact DNA into chromatin, limiting DNA accessibility to the cellular machineries which require DNA as a template. Histones thereby play a central role in transcription regulation, DNA repair, DNA replication and chromosomal stability. DNA accessibility is regulated via a complex set of post-translational modifications of histones, also called histone code, and nucleosome remodeling. In Echinus esculentus (Sea urchin), this protein is Histone H2B.3, sperm.